The following is a 572-amino-acid chain: Isocitrate lyase (572 aa).

104 to 106 (SGW) contacts substrate. A Mg(2+)-binding site is contributed by D175. C213 acts as the Proton acceptor in catalysis. Substrate is bound by residues 214–215 (GH), R250, 437–441 (NLSPS), and T472. The tract at residues 550-572 (QFKGSWTGPGSESSSHVLAKSRM) is disordered. Positions 570 to 572 (SRM) match the Microbody targeting signal motif.

Belongs to the isocitrate lyase/PEP mutase superfamily. Isocitrate lyase family. The cofactor is Mg(2+). In terms of tissue distribution, expressed in leaves.

The protein localises to the glyoxysome. The enzyme catalyses D-threo-isocitrate = glyoxylate + succinate. Its pathway is carbohydrate metabolism; glyoxylate cycle; (S)-malate from isocitrate: step 1/2. In terms of biological role, involved in storage lipid mobilization during the growth of higher plant seedling. This chain is Isocitrate lyase, found in Oryza sativa subsp. japonica (Rice).